A 166-amino-acid chain; its full sequence is Endoribonuclease YbeY (166 aa).

Positions 132, 136, and 142 each coordinate Zn(2+).

This sequence belongs to the endoribonuclease YbeY family. It depends on Zn(2+) as a cofactor.

It localises to the cytoplasm. Single strand-specific metallo-endoribonuclease involved in late-stage 70S ribosome quality control and in maturation of the 3' terminus of the 16S rRNA. The polypeptide is Endoribonuclease YbeY (Clostridium acetobutylicum (strain ATCC 824 / DSM 792 / JCM 1419 / IAM 19013 / LMG 5710 / NBRC 13948 / NRRL B-527 / VKM B-1787 / 2291 / W)).